Here is a 321-residue protein sequence, read N- to C-terminus: MASSQGKNELKFADWMATLPESIHSIPLTNLAIPGSHDSFSFYIDEASPVGPEQPETVQNFVSVFGTVAKKLMRKWLATQTMSFTGQLGAGIRYFDLRISTKPRDPDNELYFAHGLFSAKVNEGLEEINAFLTDHHKEVVFLDFNHFYGMQKYHHEKLVQMLKNIYGNKMCPAIFAQEVSLKYLWEKDYQVLVFYHSPVALEVPFLWPGQMMPAPWANTTDPEKLIQFLQASITERRKKGSFFISQVVLTPKASTVVKGVASGLRETITERALPAMMQWIRTQKPGESGINIVTADFVELGDFISTVIKLNYVFNEGEANT.

Positions 22-197 constitute a PI-PLC X-box domain; the sequence is SIHSIPLTNL…DYQVLVFYHS (176 aa). Catalysis depends on residues H37 and H114.

As to expression, widely expressed, with highest levels in brain, followed by heart atrium. Not detected in small intestine, nor stomach.

The protein resides in the cytoplasm. The chain is PI-PLC X domain-containing protein 3 (Plcxd3) from Mus musculus (Mouse).